Consider the following 294-residue polypeptide: Nucleotide-binding protein CLB_3433 (294 aa).

Residue 8 to 15 coordinates ATP; that stretch reads GLSGAGKT. 59 to 62 contacts GTP; that stretch reads DIRG.

The protein belongs to the RapZ-like family.

In terms of biological role, displays ATPase and GTPase activities. The polypeptide is Nucleotide-binding protein CLB_3433 (Clostridium botulinum (strain ATCC 19397 / Type A)).